A 176-amino-acid polypeptide reads, in one-letter code: MSLNNVPAGKSLPDDIYVVIEIPANADPIKYEVDKESGAVFVDRFMSAPMFYPCNYGYVNHTLSLDGDPVDVLVPTPYPLIPGSVIRCRPVGVLKMTDESGEDAKVVAVPHTKISKEYDHIQDVNDLPALLKAQITHFFERYKELESGKWVKVDGWEDAASARAEILSSYERAQNK.

Substrate-binding residues include Lys30, Arg44, and Tyr56. Mg(2+)-binding residues include Asp66, Asp71, and Asp103. Position 142 (Tyr142) interacts with substrate.

Belongs to the PPase family. As to quaternary structure, homohexamer. Mg(2+) serves as cofactor.

Its subcellular location is the cytoplasm. The enzyme catalyses diphosphate + H2O = 2 phosphate + H(+). Functionally, catalyzes the hydrolysis of inorganic pyrophosphate (PPi) forming two phosphate ions. The protein is Inorganic pyrophosphatase of Vibrio cholerae serotype O1 (strain ATCC 39315 / El Tor Inaba N16961).